The following is a 608-amino-acid chain: MGKVIGIDLGTTNSCVAVMEGGEPVVIPNSEGSRTTPSVVAFTKNNERLVGQVAKRQAITNPERTIISIKRDMGTDKRVKIDDKSYTPQEISAMILQKIKADAEAYLGEKVTQAVITVPAYFSDSQRQATKDAGRIAGLEVLRIINEPTAAALAYGLDKESDQKILVFDLGGGTFDVSILEIGDGVFEVLATSGNNRLGGDDFDQRIIDYLIDLFKKEHGIDLSTDKMAMQRLKEAAEKAKIELSGVTTTNINLPFITADANGPKHLDVTLTRAKFEELTADLVEKTMEPTRRALEDSGLTPDKIDKILLVGGSTRIPAVQEAVRKFFGKEPFKGINPDECVAIGAAIQAGVLTGEVKDLLLLDVTPLSLGIETLGGVFTKLIERNTTIPTKKSQIFSTAADGQTAVTVRVFQGERAMAADNKLLGEFTLDGIPPAPKGVPQIEVTFDIDANGIVHVSAKDLGTGKEQHITITASTNLSEAEIEKAINEAKKYEEEDRKRKESAETRNNADSMVFQAEKTLKDLGDKLSSEDKAKIEAEIEKVREALKGTDTQAIKKATEDLQQAFYSVSAKIYQQGQAAGANPGAQTTGGEQGNVYDAEYKVVDDDK.

Threonine 174 carries the phosphothreonine; by autocatalysis modification. Over residues 493-505 the composition is skewed to basic and acidic residues; the sequence is YEEEDRKRKESAE. Disordered regions lie at residues 493–514 and 577–608; these read YEEEDRKRKESAETRNNADSMV and GQAAGANPGAQTTGGEQGNVYDAEYKVVDDDK. Positions 577 to 590 are enriched in low complexity; the sequence is GQAAGANPGAQTTG. Basic and acidic residues predominate over residues 599-608; sequence AEYKVVDDDK.

Belongs to the heat shock protein 70 family.

Acts as a chaperone. This chain is Chaperone protein DnaK, found in Acetivibrio thermocellus (strain ATCC 27405 / DSM 1237 / JCM 9322 / NBRC 103400 / NCIMB 10682 / NRRL B-4536 / VPI 7372) (Clostridium thermocellum).